A 424-amino-acid chain; its full sequence is Chitinase CLP (424 aa).

Residues methionine 1–serine 18 form the signal peptide. Positions alanine 43–serine 405 constitute a Peptidase A1 domain. Asparagine 139, asparagine 345, and asparagine 419 each carry an N-linked (GlcNAc...) asparagine glycan.

It belongs to the peptidase A1 family. In terms of tissue distribution, expressed in roots. Expressed at low levels in leaf sheaths, stems and flowers.

Its subcellular location is the secreted. The protein resides in the extracellular space. The protein localises to the apoplast. It catalyses the reaction Random endo-hydrolysis of N-acetyl-beta-D-glucosaminide (1-&gt;4)-beta-linkages in chitin and chitodextrins.. Its function is as follows. Chitinase that possesses antifungal activity. Inhibits the growth of the fungal pathogen Rhizoctonia solani by degrading the fungal cell wall. Does not possess inhibiting activity against fungal endo-1,4-beta-D-xylanases belonging to glycoside hydrolase family 10 (GH10) and family 11 (GH11). Involved in the regulation of plant growth by regulating the intracellular calcium ion concentration in roots. In Oryza sativa subsp. japonica (Rice), this protein is Chitinase CLP.